A 261-amino-acid chain; its full sequence is uncharacterized protein (261 aa).

The signal sequence occupies residues 1 to 22 (MGYLKKVGMCISLLIVIIFVTS). Cys-23 carries N-palmitoyl cysteine lipidation. Cys-23 carries the S-diacylglycerol cysteine lipid modification.

This sequence belongs to the staphylococcal tandem lipoprotein family.

Its subcellular location is the cell membrane. This is an uncharacterized protein from Staphylococcus aureus (strain bovine RF122 / ET3-1).